Consider the following 149-residue polypeptide: Deoxyuridine 5'-triphosphate nucleotidohydrolase (149 aa).

Residues 66–68, Asn79, 83–85, and Lys93 contribute to the substrate site; these read RSG and TID.

It belongs to the dUTPase family. It depends on Mg(2+) as a cofactor.

It carries out the reaction dUTP + H2O = dUMP + diphosphate + H(+). The protein operates within pyrimidine metabolism; dUMP biosynthesis; dUMP from dCTP (dUTP route): step 2/2. In terms of biological role, this enzyme is involved in nucleotide metabolism: it produces dUMP, the immediate precursor of thymidine nucleotides and it decreases the intracellular concentration of dUTP so that uracil cannot be incorporated into DNA. This is Deoxyuridine 5'-triphosphate nucleotidohydrolase from Corynebacterium glutamicum (strain ATCC 13032 / DSM 20300 / JCM 1318 / BCRC 11384 / CCUG 27702 / LMG 3730 / NBRC 12168 / NCIMB 10025 / NRRL B-2784 / 534).